Consider the following 173-residue polypeptide: 3-hydroxydecanoyl-[acyl-carrier-protein] dehydratase (173 aa).

The active site involves His71.

The protein belongs to the thioester dehydratase family. FabA subfamily. In terms of assembly, homodimer.

The protein resides in the cytoplasm. It carries out the reaction a (3R)-hydroxyacyl-[ACP] = a (2E)-enoyl-[ACP] + H2O. The enzyme catalyses (3R)-hydroxydecanoyl-[ACP] = (2E)-decenoyl-[ACP] + H2O. It catalyses the reaction (2E)-decenoyl-[ACP] = (3Z)-decenoyl-[ACP]. It participates in lipid metabolism; fatty acid biosynthesis. Necessary for the introduction of cis unsaturation into fatty acids. Catalyzes the dehydration of (3R)-3-hydroxydecanoyl-ACP to E-(2)-decenoyl-ACP and then its isomerization to Z-(3)-decenoyl-ACP. Can catalyze the dehydratase reaction for beta-hydroxyacyl-ACPs with saturated chain lengths up to 16:0, being most active on intermediate chain length. The protein is 3-hydroxydecanoyl-[acyl-carrier-protein] dehydratase of Baumannia cicadellinicola subsp. Homalodisca coagulata.